Here is a 338-residue protein sequence, read N- to C-terminus: Tetraacyldisaccharide 4'-kinase (338 aa).

Residue threonine 61–threonine 68 coordinates ATP.

The protein belongs to the LpxK family.

It carries out the reaction a lipid A disaccharide + ATP = a lipid IVA + ADP + H(+). It functions in the pathway glycolipid biosynthesis; lipid IV(A) biosynthesis; lipid IV(A) from (3R)-3-hydroxytetradecanoyl-[acyl-carrier-protein] and UDP-N-acetyl-alpha-D-glucosamine: step 6/6. In terms of biological role, transfers the gamma-phosphate of ATP to the 4'-position of a tetraacyldisaccharide 1-phosphate intermediate (termed DS-1-P) to form tetraacyldisaccharide 1,4'-bis-phosphate (lipid IVA). The protein is Tetraacyldisaccharide 4'-kinase of Nitrosococcus oceani (strain ATCC 19707 / BCRC 17464 / JCM 30415 / NCIMB 11848 / C-107).